The chain runs to 191 residues: CASP-like protein 2U4 (191 aa).

Residues Met-1–Arg-25 lie on the Cytoplasmic side of the membrane. Residues Leu-26–Ile-46 form a helical membrane-spanning segment. The Extracellular segment spans residues Ala-47–Ala-68. A helical membrane pass occupies residues Phe-69 to Leu-89. The Cytoplasmic portion of the chain corresponds to Ser-90–Asp-114. A helical membrane pass occupies residues Gln-115 to Ala-135. At Lys-136–Arg-157 the chain is on the extracellular side. An N-linked (GlcNAc...) asparagine glycan is attached at Asn-137. Residues Ala-158–Ile-178 form a helical membrane-spanning segment. The Cytoplasmic segment spans residues Ser-179–Val-191.

This sequence belongs to the Casparian strip membrane proteins (CASP) family. In terms of assembly, homodimer and heterodimers.

It is found in the cell membrane. The chain is CASP-like protein 2U4 from Selaginella moellendorffii (Spikemoss).